A 321-amino-acid chain; its full sequence is NADH-ubiquinone oxidoreductase chain 1 (321 aa).

The next 8 helical transmembrane spans lie at 6 to 26 (IVPP…LTAL), 67 to 87 (LLAT…LALA), 103 to 123 (LGLL…LWSG), 143 to 163 (ISYE…SGGF), 174 to 194 (PLYL…STLA), 220 to 240 (ASPF…MNTL), 256 to 276 (ALFT…FLWV), and 296 to 316 (FLPM…SMFG).

This sequence belongs to the complex I subunit 1 family.

It localises to the mitochondrion inner membrane. The catalysed reaction is a ubiquinone + NADH + 5 H(+)(in) = a ubiquinol + NAD(+) + 4 H(+)(out). Functionally, core subunit of the mitochondrial membrane respiratory chain NADH dehydrogenase (Complex I) that is believed to belong to the minimal assembly required for catalysis. Complex I functions in the transfer of electrons from NADH to the respiratory chain. The immediate electron acceptor for the enzyme is believed to be ubiquinone. The polypeptide is NADH-ubiquinone oxidoreductase chain 1 (MT-ND1) (Alligator mississippiensis (American alligator)).